A 540-amino-acid polypeptide reads, in one-letter code: Arylsulfatase K (540 aa).

Positions 1 to 22 (MLLLWVSVVAASALAAPAPGAD) are cleaved as a signal peptide. Positions 44 and 84 each coordinate Ca(2+). Cys-84 acts as the Nucleophile in catalysis. Cys-84 is subject to 3-oxoalanine (Cys). Asn-112 is a glycosylation site (N-linked (GlcNAc...) asparagine). Lys-132 is a substrate binding site. Asn-197 carries N-linked (GlcNAc...) asparagine glycosylation. His-255 is a substrate binding site. An N-linked (GlcNAc...) asparagine glycan is attached at Asn-266. The Ca(2+) site is built by Asp-317 and His-318. N-linked (GlcNAc...) asparagine glycosylation is found at Asn-379, Asn-417, and Asn-502.

It belongs to the sulfatase family. Ca(2+) serves as cofactor. The conversion to 3-oxoalanine (also known as C-formylglycine, FGly), of a serine or cysteine residue in prokaryotes and of a cysteine residue in eukaryotes, is critical for catalytic activity. In terms of processing, the 75-kDa precursor undergoes proteolytic processing to yield a 23 kDa form. Post-translationally, N-glycosylated with both high mannose and complex type sugars.

The protein localises to the secreted. Its subcellular location is the lysosome. It carries out the reaction an aryl sulfate + H2O = a phenol + sulfate + H(+). The enzyme catalyses Hydrolysis of the 2-sulfate groups of the 2-O-sulfo-D-glucuronate residues of chondroitin sulfate, heparin and heparitin sulfate.. Its function is as follows. Catalyzes the hydrolysis of pseudosubstrates such as p-nitrocatechol sulfate and p-nitrophenyl sulfate. Catalyzes the hydrolysis of the 2-sulfate groups of the 2-O-sulfo-D-glucuronate residues of chondroitin sulfate, heparin and heparitin sulfate. Acts selectively on 2-sulfoglucuronate and lacks activity against 2-sulfoiduronate. The chain is Arylsulfatase K (ARSK) from Bos taurus (Bovine).